Here is an 887-residue protein sequence, read N- to C-terminus: Beta-galactosidase 9 (887 aa).

Positions 1–30 (MAESIRTFSLQWRILSLIIALLVYFPILSG) are cleaved as a signal peptide. Asparagine 37 carries N-linked (GlcNAc...) asparagine glycosylation. The Proton donor role is filled by glutamate 194. The active-site Nucleophile is the glutamate 263. Asparagine 463, asparagine 485, asparagine 496, asparagine 527, and asparagine 785 each carry an N-linked (GlcNAc...) asparagine glycan. The SUEL-type lectin domain maps to 791–877 (NSVAPEVHLH…KTLAVMSRCS (87 aa)). An N-linked (GlcNAc...) asparagine glycan is attached at asparagine 881.

This sequence belongs to the glycosyl hydrolase 35 family. Ubiquitous, with higher expression levels in siliques.

The protein localises to the secreted. Its subcellular location is the extracellular space. The protein resides in the apoplast. It catalyses the reaction Hydrolysis of terminal non-reducing beta-D-galactose residues in beta-D-galactosides.. The chain is Beta-galactosidase 9 (BGAL9) from Arabidopsis thaliana (Mouse-ear cress).